Here is a 259-residue protein sequence, read N- to C-terminus: Isoepoxydon dehydrogenase patN (259 aa).

NADP(+) is bound by residues Asp-69, Asn-96, and Lys-125. Catalysis depends on proton donor residues Ser-143 and Ser-144. Residues Tyr-158, Lys-162, and Val-191 each contribute to the NADP(+) site. The Proton acceptor role is filled by Tyr-158. The active-site Lowers pKa of active site Tyr is the Lys-162.

The protein belongs to the short-chain dehydrogenases/reductases (SDR) family.

The protein localises to the cytoplasm. It is found in the cytosol. It catalyses the reaction isoepoxydon + NADP(+) = phyllostine + NADPH + H(+). Its pathway is mycotoxin biosynthesis; patulin biosynthesis. In terms of biological role, isoepoxydon dehydrogenase; part of the gene cluster that mediates the biosynthesis of patulin, an acetate-derived tetraketide mycotoxin produced by several fungal species that shows antimicrobial properties against several bacteria. PatN catalyzes the conversion of isoepoxydon into phyllostine. The pathway begins with the synthesis of 6-methylsalicylic acid by the polyketide synthase (PKS) patK via condensation of acetate and malonate units. The 6-methylsalicylic acid decarboxylase patG then catalyzes the decarboxylation of 6-methylsalicylic acid to yield m-cresol (also known as 3-methylphenol). These first reactions occur in the cytosol. The intermediate m-cresol is then transported into the endoplasmic reticulum where the cytochrome P450 monooxygenase patH converts it to m-hydroxybenzyl alcohol, which is further converted to gentisyl alcohol by the cytochrome P450 monooxygenase patI. The oxidoreductases patJ and patO further convert gentisyl alcohol to isoepoxydon in the vacuole. PatN catalyzes then the transformation of isoepoxydon into phyllostine. The cluster protein patF is responsible for the conversion from phyllostine to neopatulin whereas the alcohol dehydrogenase patD converts neopatulin to E-ascladiol. The steps between isoepoxydon and E-ascladiol occur in the cytosol, and E-ascladiol is probably secreted to the extracellular space by one of the cluster-specific transporters patC or patM. Finally, the secreted patulin synthase patE catalyzes the conversion of E-ascladiol to patulin. This is Isoepoxydon dehydrogenase patN from Penicillium expansum (Blue mold rot fungus).